The primary structure comprises 596 residues: Probable translation initiation factor IF-2 (596 aa).

The tr-type G domain maps to Ile-3–Leu-220. The segment at Gly-12–Thr-19 is G1. Residue Gly-12–Thr-19 participates in GTP binding. Positions Gly-37–His-41 are G2. Residues Asp-76–Gly-79 are G3. Residues Asp-76–His-80 and Asn-130–Asp-133 each bind GTP. The tract at residues Asn-130–Asp-133 is G4. The interval Ser-198 to Lys-200 is G5.

Belongs to the TRAFAC class translation factor GTPase superfamily. Classic translation factor GTPase family. IF-2 subfamily.

Functionally, function in general translation initiation by promoting the binding of the formylmethionine-tRNA to ribosomes. Seems to function along with eIF-2. The sequence is that of Probable translation initiation factor IF-2 from Methanobrevibacter smithii (strain ATCC 35061 / DSM 861 / OCM 144 / PS).